A 311-amino-acid polypeptide reads, in one-letter code: 5'-adenylylsulfate reductase-like 3 (311 aa).

The first 22 residues, 1–22 (MATRLLCWTALLLPIIAATAAA), serve as a signal peptide directing secretion. The 142-residue stretch at 23–164 (SPLPEACPVP…LAAFYRDVSG (142 aa)) folds into the Thioredoxin domain. A glycan (N-linked (GlcNAc...) asparagine) is linked at Asn139. A helical transmembrane segment spans residues 210-230 (LALATAFVILRLLYLLFPKIG). N-linked (GlcNAc...) asparagine glycans are attached at residues Asn281 and Asn305.

Its subcellular location is the membrane. The sequence is that of 5'-adenylylsulfate reductase-like 3 (APRL3) from Oryza sativa subsp. japonica (Rice).